The following is a 133-amino-acid chain: MALENLKPAQGSTKDRKRVGRGQGSGMGKTSTRGGKGQTARTGYKAKRGFEGGQQPLQRRLPKVGFTTQIAKPYVINVEKITKVAELAEITLDSIASVHKFPASTLKIKLIGKGASELASKIKDERITTSGRA.

A disordered region spans residues 1–60; that stretch reads MALENLKPAQGSTKDRKRVGRGQGSGMGKTSTRGGKGQTARTGYKAKRGFEGGQQPLQRR.

This sequence belongs to the universal ribosomal protein uL15 family. As to quaternary structure, part of the 50S ribosomal subunit.

Functionally, binds to the 23S rRNA. The polypeptide is Large ribosomal subunit protein uL15 (Wolinella succinogenes (strain ATCC 29543 / DSM 1740 / CCUG 13145 / JCM 31913 / LMG 7466 / NCTC 11488 / FDC 602W) (Vibrio succinogenes)).